Reading from the N-terminus, the 544-residue chain is Serine/threonine-protein kinase PAK 1 (544 aa).

The segment at methionine 1–leucine 77 is disordered. At serine 2 the chain carries N-acetylserine. Serine 21 bears the Phosphoserine; by PKB and autocatalysis mark. Residues lysine 68 to leucine 77 are compositionally biased toward basic and acidic residues. An autoregulatory region region spans residues lysine 70–glutamine 140. The 14-residue stretch at isoleucine 75–glycine 88 folds into the CRIB domain. Positions isoleucine 75–arginine 105 are GTPase-binding. The residue at position 84 (threonine 84) is a Phosphothreonine; by OXSR1. Phosphoserine is present on serine 115. Phosphotyrosine is present on residues tyrosine 131 and tyrosine 142. A phosphoserine; by autocatalysis mark is found at serine 144 and serine 149. Tyrosine 153 is subject to Phosphotyrosine; by JAK2. The disordered stretch occupies residues valine 161–proline 193. The residue at position 174 (serine 174) is a Phosphoserine. The span at serine 174–glycine 183 shows a compositional bias: acidic residues. A Phosphothreonine modification is found at threonine 184. At serine 198 the chain carries Phosphoserine; by autocatalysis. Tyrosine 200 bears the Phosphotyrosine; by JAK2 mark. The residue at position 203 (serine 203) is a Phosphoserine; by autocatalysis. Residues threonine 211 and threonine 218 each carry the phosphothreonine modification. The disordered stretch occupies residues proline 212–glutamate 250. A phosphoserine mark is found at serine 219 and serine 222. The segment covering serine 219 to proline 230 has biased composition (polar residues). A phosphothreonine mark is found at threonine 224, threonine 228, and threonine 229. Residues tyrosine 269–leucine 520 enclose the Protein kinase domain. Isoleucine 275–valine 283 contributes to the ATP binding site. A Phosphotyrosine; by JAK2 modification is found at tyrosine 284. Lysine 298 contacts ATP. The active-site Proton acceptor is the aspartate 388. The residue at position 422 (threonine 422) is a Phosphothreonine; by autocatalysis, BRSK2 and PDPK1.

The protein belongs to the protein kinase superfamily. STE Ser/Thr protein kinase family. STE20 subfamily. Homodimer in its autoinhibited state. Active as monomer. Interacts with GIT1. Component of cytoplasmic complexes, which also contains PXN, ARHGEF7 and GIT1. Interacts with NISCH. Interacts with DVL1; mediates the formation of a DVL1, MUSK and PAK1 ternary complex involved in AChR clustering. Binds to the caspase-cleaved p110 isoform of CDC2L1 and CDC2L2, p110C, but not the full-length proteins. Interacts with ARHGEF7. Interacts tightly with GTP-bound but not GDP-bound CDC42/P21 and RAC1. Probably found in a ternary complex composed of DSCAM, PAK1 and RAC1. Interacts with DSCAM (via cytoplasmic domain); the interaction is direct and enhanced in presence of RAC1. Interacts with SCRIB. Interacts with PDPK1. Interacts (via kinase domain) with RAF1. Interacts with NCK1 and NCK2. Interacts with TBCB. Interacts with BRSK2. Interacts with SNAI1. Interacts with CIB1 (via N-terminal region); the interaction is direct, promotes PAK1 activity and occurs in a calcium-dependent manner. Interacts with INPP5K. Interacts with gamma-tubulin. Interacts with RHOU; the interaction promotes PAK1 activation. Requires Mg(2+) as cofactor. In terms of processing, autophosphorylated in trans, meaning that in a dimer, one kinase molecule phosphorylates the other one. Activated by autophosphorylation at Thr-422 in response to a conformation change, triggered by interaction with GTP-bound CDC42 or RAC1. Activated by phosphorylation at Thr-422 by BRSK2 and by PDPK1. Phosphorylated by JAK2 in response to PRL; this increases PAK1 kinase activity. Phosphorylated at Ser-21 by PKB/AKT; this reduces interaction with NCK1 and association with focal adhesion sites. Upon DNA damage, phosphorylated at Thr-211 and translocates to the nucleoplasm. Phosphorylated at tyrosine residues, which can be enhanced by NTN1.

Its subcellular location is the cytoplasm. It localises to the cell junction. It is found in the focal adhesion. The protein resides in the cell projection. The protein localises to the lamellipodium. Its subcellular location is the cell membrane. It localises to the ruffle membrane. It is found in the invadopodium. The protein resides in the nucleus. The protein localises to the nucleoplasm. Its subcellular location is the chromosome. It localises to the cytoskeleton. It is found in the microtubule organizing center. The protein resides in the centrosome. The enzyme catalyses L-seryl-[protein] + ATP = O-phospho-L-seryl-[protein] + ADP + H(+). It catalyses the reaction L-threonyl-[protein] + ATP = O-phospho-L-threonyl-[protein] + ADP + H(+). With respect to regulation, phosphorylation of Thr-84 by OXSR1 inhibits activation. Activated by binding small G proteins. Binding of GTP-bound CDC42 or RAC1 to the autoregulatory region releases monomers from the autoinhibited dimer, and enables activation by phosphorylation of Thr-422. Functionally, protein kinase involved in intracellular signaling pathways downstream of integrins and receptor-type kinases that plays an important role in cytoskeleton dynamics, in cell adhesion, migration, proliferation, apoptosis, mitosis, and in vesicle-mediated transport processes. Can directly phosphorylate BAD and protects cells against apoptosis. Activated by interaction with CDC42 and RAC1. Functions as a GTPase effector that links the Rho-related GTPases CDC42 and RAC1 to the JNK MAP kinase pathway. Phosphorylates and activates MAP2K1, and thereby mediates activation of downstream MAP kinases. Involved in the reorganization of the actin cytoskeleton, actin stress fibers and of focal adhesion complexes. Phosphorylates the tubulin chaperone TBCB and thereby plays a role in the regulation of microtubule biogenesis and organization of the tubulin cytoskeleton. Plays a role in the regulation of insulin secretion in response to elevated glucose levels. Part of a ternary complex that contains PAK1, DVL1 and MUSK that is important for MUSK-dependent regulation of AChR clustering during the formation of the neuromuscular junction (NMJ). Activity is inhibited in cells undergoing apoptosis, potentially due to binding of CDC2L1 and CDC2L2. Phosphorylates MYL9/MLC2. Phosphorylates RAF1 at 'Ser-338' and 'Ser-339' resulting in: activation of RAF1, stimulation of RAF1 translocation to mitochondria, phosphorylation of BAD by RAF1, and RAF1 binding to BCL2. Phosphorylates SNAI1 at 'Ser-246' promoting its transcriptional repressor activity by increasing its accumulation in the nucleus. In podocytes, promotes NR3C2 nuclear localization. Required for atypical chemokine receptor ACKR2-induced phosphorylation of LIMK1 and cofilin (CFL1) and for the up-regulation of ACKR2 from endosomal compartment to cell membrane, increasing its efficiency in chemokine uptake and degradation. In synapses, seems to mediate the regulation of F-actin cluster formation performed by SHANK3, maybe through CFL1 phosphorylation and inactivation. Plays a role in RUFY3-mediated facilitating gastric cancer cells migration and invasion. In response to DNA damage, phosphorylates MORC2 which activates its ATPase activity and facilitates chromatin remodeling. In neurons, plays a crucial role in regulating GABA(A) receptor synaptic stability and hence GABAergic inhibitory synaptic transmission through its role in F-actin stabilization. In hippocampal neurons, necessary for the formation of dendritic spines and excitatory synapses; this function is dependent on kinase activity and may be exerted by the regulation of actomyosin contractility through the phosphorylation of myosin II regulatory light chain (MLC). Along with GIT1, positively regulates microtubule nucleation during interphase. Phosphorylates FXR1, promoting its localization to stress granules and activity. Phosphorylates ILK on 'Thr-173' and 'Ser-246', promoting nuclear export of ILK. In Bos taurus (Bovine), this protein is Serine/threonine-protein kinase PAK 1.